A 217-amino-acid chain; its full sequence is Probable GTP-binding protein EngB (217 aa).

The region spanning 29–213 is the EngB-type G domain; it reads GPSEVAFAGR…RQAIAQTVGI (185 aa). Residues 37 to 44, 64 to 68, 91 to 94, 158 to 161, and 192 to 194 each bind GTP; these read GRSNVGKS, GRTQE, DMPG, TKTD, and TSS. 2 residues coordinate Mg(2+): Ser44 and Thr66.

The protein belongs to the TRAFAC class TrmE-Era-EngA-EngB-Septin-like GTPase superfamily. EngB GTPase family. Requires Mg(2+) as cofactor.

In terms of biological role, necessary for normal cell division and for the maintenance of normal septation. The protein is Probable GTP-binding protein EngB of Rhizobium etli (strain CIAT 652).